Reading from the N-terminus, the 450-residue chain is Asparagine--tRNA ligase (450 aa).

This sequence belongs to the class-II aminoacyl-tRNA synthetase family. Homodimer.

Its subcellular location is the cytoplasm. It carries out the reaction tRNA(Asn) + L-asparagine + ATP = L-asparaginyl-tRNA(Asn) + AMP + diphosphate + H(+). This Metamycoplasma arthritidis (strain 158L3-1) (Mycoplasma arthritidis) protein is Asparagine--tRNA ligase.